The primary structure comprises 330 residues: 2-alkyl-3-oxoalkanoate reductase (330 aa).

Catalysis depends on Tyr139, which acts as the Proton acceptor. Lys143 serves as a coordination point for NADP(+).

It belongs to the 3-beta-HSD family. Homodimer.

It carries out the reaction a (2R,3S)-2-alkyl-3-hydroxyalkanoate + NADP(+) = an (R)-2-alkyl-3-oxoalkanoate + NADPH + H(+). In terms of biological role, involved in olefin biosynthesis. Catalyzes the reversible stereospecific NADPH-dependent reduction of 2-alkyl-3-oxoalkanoic acids to 2-alkyl-3-hydroxyalkanoic acids. In the oxidative direction, syn-2-decyl-3-hydroxytetradecanoic acid is the preferred substrate. In the reductive direction, (2R/S)-2-hexyl-3-ketodecanoic acid is accepted as substrate. This chain is 2-alkyl-3-oxoalkanoate reductase, found in Stenotrophomonas maltophilia (strain K279a).